The following is a 94-amino-acid chain: Aspartyl/glutamyl-tRNA(Asn/Gln) amidotransferase subunit C (94 aa).

The protein belongs to the GatC family. In terms of assembly, heterotrimer of A, B and C subunits.

The catalysed reaction is L-glutamyl-tRNA(Gln) + L-glutamine + ATP + H2O = L-glutaminyl-tRNA(Gln) + L-glutamate + ADP + phosphate + H(+). The enzyme catalyses L-aspartyl-tRNA(Asn) + L-glutamine + ATP + H2O = L-asparaginyl-tRNA(Asn) + L-glutamate + ADP + phosphate + 2 H(+). Functionally, allows the formation of correctly charged Asn-tRNA(Asn) or Gln-tRNA(Gln) through the transamidation of misacylated Asp-tRNA(Asn) or Glu-tRNA(Gln) in organisms which lack either or both of asparaginyl-tRNA or glutaminyl-tRNA synthetases. The reaction takes place in the presence of glutamine and ATP through an activated phospho-Asp-tRNA(Asn) or phospho-Glu-tRNA(Gln). The chain is Aspartyl/glutamyl-tRNA(Asn/Gln) amidotransferase subunit C from Hydrogenobaculum sp. (strain Y04AAS1).